The primary structure comprises 135 residues: Transcription antitermination protein NusB (135 aa).

Belongs to the NusB family.

In terms of biological role, involved in transcription antitermination. Required for transcription of ribosomal RNA (rRNA) genes. Binds specifically to the boxA antiterminator sequence of the ribosomal RNA (rrn) operons. The chain is Transcription antitermination protein NusB from Lacticaseibacillus casei (strain BL23) (Lactobacillus casei).